Here is a 427-residue protein sequence, read N- to C-terminus: Serine--tRNA ligase (427 aa).

Position 231-233 (231-233 (TAE)) interacts with L-serine. 262-264 (RSE) lines the ATP pocket. E285 contacts L-serine. 349–352 (EISS) lines the ATP pocket. Residue S385 participates in L-serine binding.

The protein belongs to the class-II aminoacyl-tRNA synthetase family. Type-1 seryl-tRNA synthetase subfamily. Homodimer. The tRNA molecule binds across the dimer.

It localises to the cytoplasm. It catalyses the reaction tRNA(Ser) + L-serine + ATP = L-seryl-tRNA(Ser) + AMP + diphosphate + H(+). The enzyme catalyses tRNA(Sec) + L-serine + ATP = L-seryl-tRNA(Sec) + AMP + diphosphate + H(+). Its pathway is aminoacyl-tRNA biosynthesis; selenocysteinyl-tRNA(Sec) biosynthesis; L-seryl-tRNA(Sec) from L-serine and tRNA(Sec): step 1/1. Its function is as follows. Catalyzes the attachment of serine to tRNA(Ser). Is also able to aminoacylate tRNA(Sec) with serine, to form the misacylated tRNA L-seryl-tRNA(Sec), which will be further converted into selenocysteinyl-tRNA(Sec). The sequence is that of Serine--tRNA ligase from Sinorhizobium fredii (strain NBRC 101917 / NGR234).